Reading from the N-terminus, the 1150-residue chain is C5a peptidase (1150 aa).

The signal sequence occupies residues 1–31 (MRKKQKLPFDKLAIALMSTSILLNAQSDIKA). Residues 33-73 (TVTEDTPAAEQAVETPQPTAVSEEVPSSKETKTPQTPDNAE) are disordered. The region spanning 99–581 (KATIRDLNDP…AGAVDAKKAS (483 aa)) is the Peptidase S8 domain. Active-site charge relay system residues include Asp130, His193, and Ser512. 2 stretches are compositionally biased toward basic and acidic residues: residues 1029-1054 (EGHS…KPEQ) and 1061-1073 (PDKK…EKDS). Residues 1029–1116 (EGHSNKPEQD…RDQLPTTNDK (88 aa)) are disordered. 3 tandem repeats follow at residues 1034-1050 (KPEQ…KPEA), 1051-1067 (KPEQ…KPET), and 1068-1084 (KPEK…TPQK). Positions 1034–1084 (KPEQDGSDQAPDKKPEAKPEQDGSGQTPDKKPETKPEKDSSGQTPGKTPQK) are 3 X 17 AA tandem repeats. Residues 1075-1089 (GQTPGKTPQKGQPSR) show a composition bias toward polar residues. The LPXTG sorting signal motif lies at 1110 to 1114 (LPTTN). Pentaglycyl murein peptidoglycan amidated threonine is present on Thr1113. Residues 1114–1150 (NDKDTNRLHLLKLVMTTFFFGLVAHIFKTKRQKETKK) constitute a propeptide, removed by sortase.

This sequence belongs to the peptidase S8 family. In terms of processing, cleaved by SpeB protease; leading to its degradation. Degradation by SpeB is probably strictly regulated to preserve integrity of C5a peptidase.

The protein resides in the secreted. It localises to the cell wall. It catalyses the reaction The primary cleavage site is at 67-His-|-Lys-68 in human C5a with a minor secondary cleavage site at 58-Ala-|-Ser-59.. In terms of biological role, this virulence factor of S.pyogenes specifically cleaves the human serum chemotaxin C5a at '68-Lys-|-Asp-69' bond near its C-terminus, destroying its ability to serve as a chemoattractant. This chain is C5a peptidase (scpA), found in Streptococcus pyogenes serotype M18 (strain MGAS8232).